Here is a 330-residue protein sequence, read N- to C-terminus: MKNSQDTQVINLVADIGGTNIRLAITDKDNNINEIKTYQCKDFPHLSNVIYHYLKENGLLNSQVNACLAIACPVDTDSISMTNLPWKFSQKQLKEELKLHSLTLINDYTAIAMAIPLLSDKQKVKIGHGEAENKQPIAVCGPGTGLGVANLVNINNHWYCLGGEGGHTDFAPVDELDVKIFQQLKTTKKRLSYEQLLSGYGLEQIYQALVIINNQEATNAEQSKLSAKEISTQAIAGTCPICQQALSQFCKILGSFSGNLALTTGSFGGVYIAGGIVPRFIDYLKNSEFRARFETKGRMSHLNEQIPTYIITESQPGLLGAAAYLNQVFP.

An ATP-binding site is contributed by 14-19 (ADIGGT).

This sequence belongs to the bacterial glucokinase family.

It localises to the cytoplasm. The enzyme catalyses D-glucose + ATP = D-glucose 6-phosphate + ADP + H(+). The sequence is that of Glucokinase from Colwellia psychrerythraea (strain 34H / ATCC BAA-681) (Vibrio psychroerythus).